The chain runs to 132 residues: NADH-quinone oxidoreductase subunit I 1 (132 aa).

4Fe-4S ferredoxin-type domains are found at residues 42–71 (LKVS…VEAG) and 81–110 (ERYE…MTGQ). 8 residues coordinate [4Fe-4S] cluster: C51, C54, C57, C61, C90, C93, C96, and C100.

This sequence belongs to the complex I 23 kDa subunit family. In terms of assembly, NDH-1 is composed of 14 different subunits. Subunits NuoA, H, J, K, L, M, N constitute the membrane sector of the complex. [4Fe-4S] cluster serves as cofactor.

The protein resides in the cell inner membrane. The enzyme catalyses a quinone + NADH + 5 H(+)(in) = a quinol + NAD(+) + 4 H(+)(out). NDH-1 shuttles electrons from NADH, via FMN and iron-sulfur (Fe-S) centers, to quinones in the respiratory chain. The immediate electron acceptor for the enzyme in this species is believed to be ubiquinone. Couples the redox reaction to proton translocation (for every two electrons transferred, four hydrogen ions are translocated across the cytoplasmic membrane), and thus conserves the redox energy in a proton gradient. The polypeptide is NADH-quinone oxidoreductase subunit I 1 (Geobacter sulfurreducens (strain ATCC 51573 / DSM 12127 / PCA)).